Consider the following 299-residue polypeptide: Delta-9 desaturase-like 2 protein (299 aa).

Residues 55 to 75 (WEAFRFGIILAILTNLCITFS) traverse the membrane as a helical segment. Residues 77–82 (HRNLTH) carry the Histidine box-1 motif. The Histidine box-2 signature appears at 114-118 (HRFHH). A helical membrane pass occupies residues 174-194 (LVLHILAFWTLIYLWGGLPYL). The Histidine box-3 motif lies at 246–250 (HNNHH). The chain crosses the membrane as a helical span at residues 262–282 (WYQLDITWYLIWFFQALGLAT).

The protein belongs to the fatty acid desaturase type 1 family. It depends on Fe cation as a cofactor.

The protein localises to the endoplasmic reticulum membrane. The protein operates within lipid metabolism; polyunsaturated fatty acid biosynthesis. The polypeptide is Delta-9 desaturase-like 2 protein (Arabidopsis thaliana (Mouse-ear cress)).